The chain runs to 201 residues: Small ribosomal subunit protein uS4 (201 aa).

The region spanning 93 to 153 (QRLDNIVYRL…EKSKNLVIIK (61 aa)) is the S4 RNA-binding domain.

This sequence belongs to the universal ribosomal protein uS4 family. Part of the 30S ribosomal subunit. Contacts protein S5. The interaction surface between S4 and S5 is involved in control of translational fidelity.

One of the primary rRNA binding proteins, it binds directly to 16S rRNA where it nucleates assembly of the body of the 30S subunit. In terms of biological role, with S5 and S12 plays an important role in translational accuracy. The chain is Small ribosomal subunit protein uS4 from Latilactobacillus sakei subsp. sakei (strain 23K) (Lactobacillus sakei subsp. sakei).